An 829-amino-acid polypeptide reads, in one-letter code: Cadherin-3 (829 aa).

The signal sequence occupies residues 1–24 (MGLPRGPLASLLLLQVCWLQCAAS). A propeptide spanning residues 25-107 (EPCRAVFREA…SKRILRRHKR (83 aa)) is cleaved from the precursor. 5 Cadherin domains span residues 108-215 (DWVV…KPKF), 216-328 (TQDT…APMF), 329-440 (DPQK…APVF), 441-546 (VPPS…DHGP), and 547-650 (VPEP…CPGP). Residues 108–654 (DWVVAPISVP…ETCPGPWKGG (547 aa)) lie on the Extracellular side of the membrane. Asn200 is a glycosylation site (N-linked (GlcNAc...) asparagine). Asn566 is a glycosylation site (N-linked (GlcNAc...) asparagine). A helical membrane pass occupies residues 655 to 677 (FILPVLGAVLALLFLLLVLLLLV). The Cytoplasmic segment spans residues 678 to 829 (RKKRKIKEPL…ADMYGGGEDD (152 aa)).

Interacts with CDCP1 and CTNNB1. In terms of tissue distribution, expressed in some normal epithelial tissues and in some carcinoma cell lines.

It localises to the cell membrane. Functionally, cadherins are calcium-dependent cell adhesion proteins. They preferentially interact with themselves in a homophilic manner in connecting cells; cadherins may thus contribute to the sorting of heterogeneous cell types. In Homo sapiens (Human), this protein is Cadherin-3 (CDH3).